A 351-amino-acid polypeptide reads, in one-letter code: Protein IBD2 (351 aa).

Residues 1 to 14 (MTPTNQSSGTTNAS) are compositionally biased toward polar residues. The disordered stretch occupies residues 1–20 (MTPTNQSSGTTNASVEVLSE). Residues serine 100 and serine 106 each carry the phosphoserine modification. Position 211 is a phosphothreonine (threonine 211). A disordered region spans residues 223 to 249 (LHGDGQHSISSRKHSRSKNSKKNGHVR). Positions 232–249 (SSRKHSRSKNSKKNGHVR) are enriched in basic residues.

It belongs to the IBD2 family. As to quaternary structure, interacts with BFA1.

The protein localises to the cytoplasm. The protein resides in the cytoskeleton. It localises to the spindle pole. Its function is as follows. Part of a checkpoint which monitors spindle integrity and prevents premature exit from mitosis. This cell-cycle arrest depends upon inhibition of the G-protein TEM1 by the BFA1/BUB2 complex. This chain is Protein IBD2 (IBD2), found in Saccharomyces cerevisiae (strain ATCC 204508 / S288c) (Baker's yeast).